The chain runs to 124 residues: Prefoldin subunit beta (124 aa).

It belongs to the prefoldin subunit beta family. Heterohexamer of two alpha and four beta subunits.

The protein localises to the cytoplasm. Functionally, molecular chaperone capable of stabilizing a range of proteins. Seems to fulfill an ATP-independent, HSP70-like function in archaeal de novo protein folding. The sequence is that of Prefoldin subunit beta (pfdB) from Thermoplasma acidophilum (strain ATCC 25905 / DSM 1728 / JCM 9062 / NBRC 15155 / AMRC-C165).